The following is a 432-amino-acid chain: Glutamyl-tRNA reductase (432 aa).

Residues 49–52, Ser-101, 106–108, and Gln-112 contribute to the substrate site; these read TCNR and EPQ. The active-site Nucleophile is the Cys-50. Position 181–186 (181–186) interacts with NADP(+); the sequence is GAGETI. The segment at 408 to 432 is disordered; it reads PEKPGYRHPPVATPIVRTDDANPAP.

It belongs to the glutamyl-tRNA reductase family. In terms of assembly, homodimer.

The enzyme catalyses (S)-4-amino-5-oxopentanoate + tRNA(Glu) + NADP(+) = L-glutamyl-tRNA(Glu) + NADPH + H(+). It participates in porphyrin-containing compound metabolism; protoporphyrin-IX biosynthesis; 5-aminolevulinate from L-glutamyl-tRNA(Glu): step 1/2. Its function is as follows. Catalyzes the NADPH-dependent reduction of glutamyl-tRNA(Glu) to glutamate 1-semialdehyde (GSA). The protein is Glutamyl-tRNA reductase of Xanthomonas campestris pv. campestris (strain 8004).